The primary structure comprises 765 residues: uncharacterized protein (765 aa).

A signal peptide spans 1-22 (MKLKGFLAVGVSVFGFSGLLMA). C23 is lipidated: N-palmitoyl cysteine. A lipid anchor (S-diacylglycerol cysteine) is attached at C23. Disordered regions lie at residues 177–203 (EGTP…LEIA) and 218–255 (TAQN…TTKS). Positions 179-192 (TPTSTTVQATVSSR) are enriched in polar residues. The segment covering 236-247 (SSSSSSTTSTTG) has biased composition (low complexity).

The protein belongs to the MG185/MG260 family.

The protein localises to the cell membrane. This is an uncharacterized protein from Mycoplasma genitalium (strain ATCC 33530 / DSM 19775 / NCTC 10195 / G37) (Mycoplasmoides genitalium).